Consider the following 422-residue polypeptide: Golgi-associated RAB2 interactor protein 2 (422 aa).

Residues 353–404 (PVESEANTSKEMKDKTSEEKMPDFQSTALKAEESRSLRTESNTSVLSPHIKS) form a disordered region. Basic and acidic residues predominate over residues 360-374 (TSKEMKDKTSEEKMP).

It belongs to the GARIN family. In terms of assembly, interacts with CALM1. As to expression, expressed in spermatozoa (at protein level).

The protein localises to the cell projection. It localises to the cilium. The protein resides in the flagellum. In terms of biological role, seems to play a role in sperm motility. The chain is Golgi-associated RAB2 interactor protein 2 from Homo sapiens (Human).